The primary structure comprises 217 residues: Coiled-coil domain-containing protein 124-B (217 aa).

The interval 1-123 (MPKKFQSENT…EKPKTHLEIP (123 aa)) is disordered. Basic and acidic residues-rich tracts occupy residues 18–45 (RKAE…DDKH), 52–74 (RKEE…QRLL), and 98–123 (QIEE…LEIP). The stretch at 41 to 83 (DDDKHVVRKEHRKEEKEKKRLELLERKKESQRLLDEEDSKMKG) forms a coiled coil.

This sequence belongs to the CCDC124 family. Associates with translationally inactive ribosomes in the nonrotated state.

It is found in the cytoplasm. The protein resides in the cytoskeleton. Its subcellular location is the microtubule organizing center. The protein localises to the centrosome. It localises to the midbody. Its function is as follows. Ribosome-binding protein involved in ribosome hibernation: associates with translationally inactive ribosomes and stabilizes the nonrotated conformation of the 80S ribosome, thereby promoting ribosome preservation and storage. This is Coiled-coil domain-containing protein 124-B (ccdc124-b) from Xenopus laevis (African clawed frog).